We begin with the raw amino-acid sequence, 100 residues long: Urease subunit gamma (100 aa).

The protein belongs to the urease gamma subunit family. Heterotrimer of UreA (gamma), UreB (beta) and UreC (alpha) subunits. Three heterotrimers associate to form the active enzyme.

Its subcellular location is the cytoplasm. It catalyses the reaction urea + 2 H2O + H(+) = hydrogencarbonate + 2 NH4(+). The protein operates within nitrogen metabolism; urea degradation; CO(2) and NH(3) from urea (urease route): step 1/1. This chain is Urease subunit gamma, found in Methylobacillus flagellatus (strain ATCC 51484 / DSM 6875 / VKM B-1610 / KT).